The chain runs to 781 residues: Acyl-CoA dehydrogenase family member 11 (781 aa).

An N6-acetyllysine modification is found at Lys177. Tyr325 is modified (phosphotyrosine). The residue at position 392 (Lys392) is an N6-succinyllysine. FAD contacts are provided by residues 505 to 515, 513 to 515, 539 to 541, and Ser541; these read FCMTEPDVASS, ASS, and WSS. Ser515 contributes to the substrate binding site. Substrate is bound at residue 630–633; the sequence is GPGR. FAD contacts are provided by residues Arg658, Gln728, and 728–732; that span reads QVCGG. Gly756 serves as a coordination point for substrate. FAD contacts are provided by residues 757–759 and Glu759; that span reads PDE.

Belongs to the acyl-CoA dehydrogenase family. Homodimer. FAD serves as cofactor.

Its subcellular location is the peroxisome. It is found in the mitochondrion membrane. The catalysed reaction is a 2,3-saturated acyl-CoA + oxidized [electron-transfer flavoprotein] + H(+) = a (2E)-enoyl-CoA + reduced [electron-transfer flavoprotein]. The enzyme catalyses docosanoyl-CoA + oxidized [electron-transfer flavoprotein] + H(+) = (2E)-docosenoyl-CoA + reduced [electron-transfer flavoprotein]. It carries out the reaction tetracosanoyl-CoA + oxidized [electron-transfer flavoprotein] + H(+) = (2E)-tetracosenoyl-CoA + reduced [electron-transfer flavoprotein]. It catalyses the reaction eicosanoyl-CoA + oxidized [electron-transfer flavoprotein] + H(+) = (2E)-eicosenoyl-CoA + reduced [electron-transfer flavoprotein]. The catalysed reaction is hexacosanoyl-CoA + oxidized [electron-transfer flavoprotein] + H(+) = (2E)-hexacosenoyl-CoA + reduced [electron-transfer flavoprotein]. The enzyme catalyses tricosanoyl-CoA + oxidized [electron-transfer flavoprotein] + H(+) = (2E)-tricosenoyl-CoA + reduced [electron-transfer flavoprotein]. It functions in the pathway lipid metabolism; fatty acid beta-oxidation. Acyl-CoA dehydrogenase, that exhibits maximal activity towards saturated C22-CoA. Probably participates in beta-oxydation and energy production but could also play a role in the metabolism of specific fatty acids to control fatty acids composition of cellular lipids in brain. This is Acyl-CoA dehydrogenase family member 11 (ACAD11) from Pongo abelii (Sumatran orangutan).